A 200-amino-acid polypeptide reads, in one-letter code: Adenylyl-sulfate kinase (200 aa).

Gly36–Ser43 contributes to the ATP binding site. Ser110 acts as the Phosphoserine intermediate in catalysis.

It belongs to the APS kinase family.

It carries out the reaction adenosine 5'-phosphosulfate + ATP = 3'-phosphoadenylyl sulfate + ADP + H(+). Its pathway is sulfur metabolism; hydrogen sulfide biosynthesis; sulfite from sulfate: step 2/3. In terms of biological role, catalyzes the synthesis of activated sulfate. This chain is Adenylyl-sulfate kinase, found in Clostridium acetobutylicum (strain ATCC 824 / DSM 792 / JCM 1419 / IAM 19013 / LMG 5710 / NBRC 13948 / NRRL B-527 / VKM B-1787 / 2291 / W).